Reading from the N-terminus, the 371-residue chain is N-acetyllactosaminide alpha-2,3-sialyltransferase (371 aa).

Gly255 provides a ligand contact to CMP-N-acetyl-beta-neuraminate. The Proton acceptor role is filled by Asp258. CMP-N-acetyl-beta-neuraminate-binding positions include 278 to 282 (APHPR), 299 to 300 (IE), and 322 to 323 (SG). Residue His280 is the Proton donor of the active site.

Belongs to the glycosyltransferase 52 family. As to quaternary structure, homodimer.

The protein localises to the cell outer membrane. It carries out the reaction a beta-D-galactosyl-(1-&gt;4)-N-acetyl-beta-D-glucosaminyl derivative + CMP-N-acetyl-beta-neuraminate = an N-acetyl-alpha-neuraminyl-(2-&gt;3)-beta-D-galactosyl-(1-&gt;4)-N-acetyl-beta-D-glucosaminyl derivative + CMP + H(+). Its pathway is bacterial outer membrane biogenesis; lipooligosaccharide biosynthesis. Its function is as follows. Catalyzes the transfer of sialic acid from the substrate CMP-N-acetylneuraminate to the terminal galactose residue of the lacto-N-neotetraose branch of surface lipooligosaccharide (LOS), forming an alpha-2,3-sialyl linkage. Thus, functions in the sialylation of LOS, which plays a role in the evasion of the host immune response by protecting N.meningitidis from complement-mediated serum killing and from phagocytic killing by neutrophils. The chain is N-acetyllactosaminide alpha-2,3-sialyltransferase from Neisseria meningitidis serogroup A / serotype 4A (strain DSM 15465 / Z2491).